A 248-amino-acid chain; its full sequence is Triosephosphate isomerase (248 aa).

The substrate site is built by Asn-10 and Lys-12. The Electrophile role is filled by His-95. The Proton acceptor role is filled by Glu-165.

This sequence belongs to the triosephosphate isomerase family. Homodimer.

It is found in the cytoplasm. It carries out the reaction D-glyceraldehyde 3-phosphate = dihydroxyacetone phosphate. It participates in carbohydrate biosynthesis; gluconeogenesis. The protein operates within carbohydrate degradation; glycolysis; D-glyceraldehyde 3-phosphate from glycerone phosphate: step 1/1. This Candida albicans (strain SC5314 / ATCC MYA-2876) (Yeast) protein is Triosephosphate isomerase (TPI1).